The chain runs to 224 residues: Putative cytochrome c-type biogenesis protein DbsD-like (224 aa).

Helical transmembrane passes span 32-52 (FIFL…ILPV), 74-94 (FLFC…ATLI), 104-124 (GIPT…LNIV), 150-170 (GIGI…LVWI), and 176-196 (IFTG…PIII).

Belongs to the DsbD family.

It is found in the plastid. The protein localises to the chloroplast membrane. Functionally, could be involved in cytochrome c synthesis. The sequence is that of Putative cytochrome c-type biogenesis protein DbsD-like from Pyropia yezoensis (Susabi-nori).